Here is a 175-residue protein sequence, read N- to C-terminus: Ribosome maturation factor RimM (175 aa).

Residues 96–175 enclose the PRC barrel domain; the sequence is EGDFYWHDLI…TIEVDWDAGF (80 aa).

This sequence belongs to the RimM family. As to quaternary structure, binds ribosomal protein uS19.

Its subcellular location is the cytoplasm. Functionally, an accessory protein needed during the final step in the assembly of 30S ribosomal subunit, possibly for assembly of the head region. Essential for efficient processing of 16S rRNA. May be needed both before and after RbfA during the maturation of 16S rRNA. It has affinity for free ribosomal 30S subunits but not for 70S ribosomes. The polypeptide is Ribosome maturation factor RimM (Histophilus somni (strain 129Pt) (Haemophilus somnus)).